The following is a 130-amino-acid chain: Fluoride-specific ion channel FluC (130 aa).

The next 4 helical transmembrane spans lie at 3–23 (FVFLWAALGGAIGSSLRYFVG), 39–59 (GTFSVNIIGCFVIGFMGHLAV), 67–87 (FGIFFVTGVLGGFTTFSSYGL), and 102–122 (VSYALGTNILGLTGVAIGWFL). Na(+) contacts are provided by Gly77 and Thr80.

This sequence belongs to the fluoride channel Fluc/FEX (TC 1.A.43) family.

It is found in the cell inner membrane. The catalysed reaction is fluoride(in) = fluoride(out). With respect to regulation, na(+) is not transported, but it plays an essential structural role and its presence is essential for fluoride channel function. Its function is as follows. Fluoride-specific ion channel. Important for reducing fluoride concentration in the cell, thus reducing its toxicity. This is Fluoride-specific ion channel FluC from Helicobacter pylori (strain ATCC 700392 / 26695) (Campylobacter pylori).